Reading from the N-terminus, the 141-residue chain is Large ribosomal subunit protein uL16 (141 aa).

Belongs to the universal ribosomal protein uL16 family. In terms of assembly, part of the 50S ribosomal subunit.

Binds 23S rRNA and is also seen to make contacts with the A and possibly P site tRNAs. The protein is Large ribosomal subunit protein uL16 of Campylobacter hominis (strain ATCC BAA-381 / DSM 21671 / CCUG 45161 / LMG 19568 / NCTC 13146 / CH001A).